Here is a 155-residue protein sequence, read N- to C-terminus: Acetylaranotin biosynthesis cluster protein L (155 aa).

It participates in mycotoxin biosynthesis. Its function is as follows. Nonribosomal peptide synthetase; part of the gene cluster that mediates the biosynthesis of acetylaranotin, a member of the epipolythiodioxopiperazine (ETP) class of toxins characterized by a disulfide-bridged cyclic dipeptide. The first step of acetylaranotin biosynthesis is performed by the NRPS ataP which produces diketopiperazine cyclo-L-Phe-L-Phe via the condensation of 2 phenylalanines (L-Phe). The ataC domain of ataTC then catalyzes the formation of bishydroxylation of cyclo-L-Phe-L-Phe. The glutathione S-transferase domain ataG in ataIMG further catalyzes the conjugation of two glutathiones to the bishydroxylated intermediate. Next, the dipeptidase ataJ removes the Glu residues. The following step is performed by the carbon sulfur lyase domain ataI of ataIMG which may convert the bis-cysteinyl adduct to yield an epidithiol intermediate. The ataT domain from ataTC then catalyzes the oxidation of the free dithiols, followed by a cyclization step catalyzed by the cytochrome P450 ataF. AtaF probably acts as an epoxidase to promote a dual epoxidation formation at C8 and C9 along with C8' and C9', followed by the spontaneous nucleophilic attack of the amide nitrogens N10 and N10' to yield an intermediate with the pyrrolidine partial structure. The final steps of acetylaranotin biosynthesis involve the acetylation and ring rearrangement of an epitetrathiodiketopiperazine intermediate to produce acetylaranotin. AtaH probably catalyzes the acetylation of epitetrathiodiketopiperazine to produce a diacetate and ataY is responsible for the formation of the dihydrooxepin moiety that converts the diacetate intermediate to acetylaranotin via acetylapoaranotin. Both enzymes could function independently in the absence of the other. The specific function of ataL within the pathway has still to be determined. The acetylaranotin bis-thiomethyltransferase ataS located outside of acetylaranotin gene cluster is the main thiomethyltransferase responsible for converting acetylaranotin and its related intermediates to their methylated forms. The chain is Acetylaranotin biosynthesis cluster protein L from Aspergillus terreus (strain NIH 2624 / FGSC A1156).